We begin with the raw amino-acid sequence, 331 residues long: Cathepsin 7 (331 aa).

The N-terminal stretch at 1–17 (MTVAVFLAILCLRAALA) is a signal peptide. Residues 18-111 (APRPDYSLDA…GKHIQKRNVK (94 aa)) constitute a propeptide, activation peptide. The short motif at 33–50 (KRNNAKTYSPEEEKQRRA) is the Nuclear localization signal element. Asparagine 72 carries N-linked (GlcNAc...) asparagine glycosylation. 3 disulfides stabilise this stretch: cysteine 133–cysteine 176, cysteine 167–cysteine 209, and cysteine 267–cysteine 320. Cysteine 136 is a catalytic residue. Active-site residues include histidine 274 and asparagine 298.

It belongs to the peptidase C1 family.

Its subcellular location is the endosome. The protein localises to the lysosome. It localises to the cytoplasm. It is found in the perinuclear region. The protein resides in the golgi apparatus. Its subcellular location is the nucleus. The protein localises to the secreted. It localises to the extracellular space. Functionally, involved in trophoblast cell proliferation and differentiation probably by affecting mitotic cell cycle progression. Proteolytic activity and nuclear localization are essential for its role in cell cycle progression. This is Cathepsin 7 (Cts7) from Rattus norvegicus (Rat).